We begin with the raw amino-acid sequence, 414 residues long: Schlafen-like protein 1 (414 aa).

The interval 141 to 203 is disordered; that stretch reads LHHREQDDSG…ISQNRPSGVR (63 aa). Residues 154–185 show a composition bias toward pro residues; it reads SHSPGPSPGPSPGPSPGFRRPPLPQLADPPPN. Residue 268-275 coordinates ATP; that stretch reads GVEDSGLV. A coiled-coil region spans residues 373–407; sequence RQKWTAELSKLEEKVDVLTLEKEQLQEQLRQRQTL.

It belongs to the Schlafen family. Subgroup I subfamily.

This is Schlafen-like protein 1 (Slfnl1) from Rattus norvegicus (Rat).